We begin with the raw amino-acid sequence, 334 residues long: Holliday junction branch migration complex subunit RuvB (334 aa).

Residues 4 to 184 (ADRLVSAGVI…FGIVQRLEFY (181 aa)) are large ATPase domain (RuvB-L). ATP is bound by residues isoleucine 23, arginine 24, glycine 65, lysine 68, threonine 69, threonine 70, 131-133 (EDY), arginine 174, tyrosine 184, and arginine 221. Threonine 69 is a Mg(2+) binding site. Residues 185–255 (RVEDLQHIVG…VASRALDMLS (71 aa)) are small ATPAse domain (RuvB-S). Positions 258-334 (SEGFDYMDRK…YKHFGITREG (77 aa)) are head domain (RuvB-H). DNA-binding residues include arginine 294, arginine 313, and arginine 318.

This sequence belongs to the RuvB family. As to quaternary structure, homohexamer. Forms an RuvA(8)-RuvB(12)-Holliday junction (HJ) complex. HJ DNA is sandwiched between 2 RuvA tetramers; dsDNA enters through RuvA and exits via RuvB. An RuvB hexamer assembles on each DNA strand where it exits the tetramer. Each RuvB hexamer is contacted by two RuvA subunits (via domain III) on 2 adjacent RuvB subunits; this complex drives branch migration. In the full resolvosome a probable DNA-RuvA(4)-RuvB(12)-RuvC(2) complex forms which resolves the HJ.

It is found in the cytoplasm. It carries out the reaction ATP + H2O = ADP + phosphate + H(+). In terms of biological role, the RuvA-RuvB-RuvC complex processes Holliday junction (HJ) DNA during genetic recombination and DNA repair, while the RuvA-RuvB complex plays an important role in the rescue of blocked DNA replication forks via replication fork reversal (RFR). RuvA specifically binds to HJ cruciform DNA, conferring on it an open structure. The RuvB hexamer acts as an ATP-dependent pump, pulling dsDNA into and through the RuvAB complex. RuvB forms 2 homohexamers on either side of HJ DNA bound by 1 or 2 RuvA tetramers; 4 subunits per hexamer contact DNA at a time. Coordinated motions by a converter formed by DNA-disengaged RuvB subunits stimulates ATP hydrolysis and nucleotide exchange. Immobilization of the converter enables RuvB to convert the ATP-contained energy into a lever motion, pulling 2 nucleotides of DNA out of the RuvA tetramer per ATP hydrolyzed, thus driving DNA branch migration. The RuvB motors rotate together with the DNA substrate, which together with the progressing nucleotide cycle form the mechanistic basis for DNA recombination by continuous HJ branch migration. Branch migration allows RuvC to scan DNA until it finds its consensus sequence, where it cleaves and resolves cruciform DNA. This chain is Holliday junction branch migration complex subunit RuvB, found in Erwinia tasmaniensis (strain DSM 17950 / CFBP 7177 / CIP 109463 / NCPPB 4357 / Et1/99).